We begin with the raw amino-acid sequence, 241 residues long: MMDWLYRYPPLYPGILLKRYKRFFADVQLTSGEIVTAHCPNTGPMTGVSTPQSAVQLSKSDNLNRKLAYTLELIQVHDNEPTWVGINTFLPNRVVKLALAKYLFPELGEYSQIKGEVVYGLDKKSRVDFFLTGSDEERPIYLEVKNTTLSEGRLALFPDTETTRGQKHLRELMALLPLTRAVMLYFINRGDCTEFSPGDRTDPVYGKLLRDAIALGLEVLPCRFDISPEGIRYLGLAKLKI.

The protein belongs to the SfsA family.

In Nostoc punctiforme (strain ATCC 29133 / PCC 73102), this protein is Sugar fermentation stimulation protein homolog.